We begin with the raw amino-acid sequence, 236 residues long: Mammalian ependymin-related protein 1 (236 aa).

An N-terminal signal peptide occupies residues 1-35 (MPRRAPLRVARGSLDAWLLGGLWVCALGCLCGVGM). Intrachain disulfides connect cysteine 54/cysteine 184, cysteine 100/cysteine 234, and cysteine 125/cysteine 222. N-linked (GlcNAc...) asparagine glycosylation is found at asparagine 142 and asparagine 194.

This sequence belongs to the ependymin family. Homodimer. Post-translationally, N-glycosylated; the glycan contains mannose-6-phosphate moieties.

The protein localises to the lysosome lumen. It is found in the secreted. Its function is as follows. Binds anionic lipids and gangliosides at acidic pH. This chain is Mammalian ependymin-related protein 1 (EPDR1), found in Bos taurus (Bovine).